A 459-amino-acid polypeptide reads, in one-letter code: MQARALLPATLATLATLAVSVLAREPPAAPCPARCDVSRCPSPRCPGGYVPDLCNCCLVCAASEGEPCGRPLDSPCGDSLECVRGVCRCRWTHTVCGTDGHTYADVCALQAASRRALQISGTPVRQLQKGACPSGLHQLTSPRYKFNFIADVVEKIAPAVVHIELFLRHPLFGRNVPLSSGSGFIMSEAGLIVTNAHVVSSSNTASGRQQLKVQLQNGDAYEATIQDIDKKSDIATILIHPNKKLPVLLLGHSADLRPGEFVVAIGSPFALQNTVTTGIVSTAQRDGKELGLRDSDMDYIQTDAIINYGNSGGPLVNLDGEVIGINTLKVAAGISFAIPSDRITRFLSEFQDKHVKDWKKRFIGIRMRTITPSLVEELKTANPDFPAVSSGIYVQEVVPNSPSQRGGIQDGDIIVKVNGRPLVDSSELQEAVLNESSLLLEVRRGNDDLLFSIMPEVVM.

Residues Met-1–Ala-23 form the signal peptide. Residues Pro-27–Arg-90 form the IGFBP N-terminal domain. 8 cysteine pairs are disulfide-bonded: Cys-31-Cys-54, Cys-35-Cys-56, Cys-40-Cys-57, Cys-45-Cys-60, Cys-68-Cys-82, Cys-76-Cys-87, Cys-89-Cys-107, and Cys-96-Cys-132. The 59-residue stretch at Cys-76–Ser-134 folds into the Kazal-like domain. A serine protease region spans residues Gly-181–Phe-346. Residues His-197, Asp-233, and Ser-311 each act as charge relay system in the active site. The PDZ domain occupies Ile-365 to Leu-450.

It belongs to the peptidase S1C family. In terms of assembly, homotrimer. Interacts with TGFB1; the interaction inhibits TGFB-mediated signaling. Interacts with BMP4; the interaction inhibits BMP4-mediated signaling. Interacts with TGFB2, GDF5 and MYH9. Expressed in the ovary, essentially in granulosa cells in a follicle-stage specific manner. Highest levels found in large luteinizing granulosa cells.

It localises to the secreted. Its function is as follows. Serine protease that cleaves beta-casein/CSN2 as well as several extracellular matrix (ECM) proteoglycans such as decorin/DCN, biglycan/BGN and fibronectin/FN1. Inhibits signaling mediated by TGF-beta family proteins possibly indirectly by degradation of these ECM proteoglycans. May act as a tumor suppressor. Negatively regulates, in vitro, trophoblast invasion during placental development and may be involved in the development of the placenta in vivo. May also have a role in ovarian development, granulosa cell differentiation and luteinization. This chain is Serine protease HTRA3 (Htra3), found in Rattus norvegicus (Rat).